The following is a 274-amino-acid chain: 2,3,4,5-tetrahydropyridine-2,6-dicarboxylate N-succinyltransferase (274 aa).

Belongs to the transferase hexapeptide repeat family.

The protein localises to the cytoplasm. It catalyses the reaction (S)-2,3,4,5-tetrahydrodipicolinate + succinyl-CoA + H2O = (S)-2-succinylamino-6-oxoheptanedioate + CoA. Its pathway is amino-acid biosynthesis; L-lysine biosynthesis via DAP pathway; LL-2,6-diaminopimelate from (S)-tetrahydrodipicolinate (succinylase route): step 1/3. The sequence is that of 2,3,4,5-tetrahydropyridine-2,6-dicarboxylate N-succinyltransferase from Proteus mirabilis (strain HI4320).